The chain runs to 506 residues: Apolipoprotein N-acyltransferase (506 aa).

6 helical membrane passes run 26–46 (FAPYQIWLVALITPALLLILI), 66–86 (FASGISWVYVSIAGFGGMPLA), 89–109 (LFLMGALIAYLAIYPALFTWS), 113–133 (FFAKATLLNLLLAAPALWLIA), 166–186 (GVELLTLLLLVGAGAIAYAVI), and 192–212 (MLLIPTVLLSTGYGLSHWDWV). The CN hydrolase domain maps to 225–471 (IQGNVDQNLK…TAVLRAELTP (247 aa)). The active-site Proton acceptor is the E264. Residue K330 is part of the active site. Catalysis depends on C382, which acts as the Nucleophile. The chain crosses the membrane as a helical span at residues 479–499 (HQLGSWPLYIWVALSLALAWW).

Belongs to the CN hydrolase family. Apolipoprotein N-acyltransferase subfamily.

It is found in the cell inner membrane. The catalysed reaction is N-terminal S-1,2-diacyl-sn-glyceryl-L-cysteinyl-[lipoprotein] + a glycerophospholipid = N-acyl-S-1,2-diacyl-sn-glyceryl-L-cysteinyl-[lipoprotein] + a 2-acyl-sn-glycero-3-phospholipid + H(+). It participates in protein modification; lipoprotein biosynthesis (N-acyl transfer). In terms of biological role, catalyzes the phospholipid dependent N-acylation of the N-terminal cysteine of apolipoprotein, the last step in lipoprotein maturation. In Vibrio vulnificus (strain CMCP6), this protein is Apolipoprotein N-acyltransferase.